We begin with the raw amino-acid sequence, 787 residues long: Endonuclease MutS2 (787 aa).

Position 334-341 (334-341 (GPNTGGKT)) interacts with ATP. The region spanning 712–787 (LDLRGKRYEE…GNGATIVTFK (76 aa)) is the Smr domain.

Belongs to the DNA mismatch repair MutS family. MutS2 subfamily. Homodimer. Binds to stalled ribosomes, contacting rRNA.

Its function is as follows. Endonuclease that is involved in the suppression of homologous recombination and thus may have a key role in the control of bacterial genetic diversity. In terms of biological role, acts as a ribosome collision sensor, splitting the ribosome into its 2 subunits. Detects stalled/collided 70S ribosomes which it binds and splits by an ATP-hydrolysis driven conformational change. Acts upstream of the ribosome quality control system (RQC), a ribosome-associated complex that mediates the extraction of incompletely synthesized nascent chains from stalled ribosomes and their subsequent degradation. Probably generates substrates for RQC. The sequence is that of Endonuclease MutS2 from Latilactobacillus sakei subsp. sakei (strain 23K) (Lactobacillus sakei subsp. sakei).